The following is a 304-amino-acid chain: Putative S-adenosyl-L-methionine-dependent methyltransferase MAP_4189c (304 aa).

S-adenosyl-L-methionine is bound by residues aspartate 130 and 159 to 160 (DL).

Belongs to the UPF0677 family.

Its function is as follows. Exhibits S-adenosyl-L-methionine-dependent methyltransferase activity. The polypeptide is Putative S-adenosyl-L-methionine-dependent methyltransferase MAP_4189c (Mycolicibacterium paratuberculosis (strain ATCC BAA-968 / K-10) (Mycobacterium paratuberculosis)).